We begin with the raw amino-acid sequence, 132 residues long: uncharacterized protein (132 aa).

The signal sequence occupies residues 1–25; that stretch reads MRFTKVVGFLSVLGLAAVFPLTAQA.

This is an uncharacterized protein from Bacillus subtilis (strain 168).